A 262-amino-acid polypeptide reads, in one-letter code: F-actin-capping protein subunit alpha (262 aa).

This sequence belongs to the F-actin-capping protein alpha subunit family. As to quaternary structure, heterodimer of an alpha and a beta subunit.

Functionally, F-actin-capping proteins bind in a Ca(2+)-independent manner to the fast growing ends of actin filaments (barbed end) thereby blocking the exchange of subunits at these ends. Unlike other capping proteins (such as gelsolin and severin), these proteins do not sever actin filaments. The polypeptide is F-actin-capping protein subunit alpha (CAP1) (Candida glabrata (strain ATCC 2001 / BCRC 20586 / JCM 3761 / NBRC 0622 / NRRL Y-65 / CBS 138) (Yeast)).